A 135-amino-acid chain; its full sequence is Galectin-1 (135 aa).

At Ala2 the chain carries N-acetylalanine. The Galectin domain maps to 4-135; it reads GLVASNLNLK…DFKIKCVAFE (132 aa). An N6-acetyllysine mark is found at Lys13, Lys19, and Lys29. Position 30 is a phosphoserine (Ser30). A beta-D-galactoside-binding positions include 45–49, His53, Asn62, and 69–72; these read HFNPR and WGTE. Lys108 is modified (N6-acetyllysine; alternate). Lys108 carries the N6-succinyllysine; alternate modification. At Lys128 the chain carries N6-acetyllysine.

In terms of assembly, homodimer. Binds LGALS3BP. Interacts with CD2, CD3, CD4, CD6, CD7, CD43, ALCAM and CD45. Interacts with laminin (via poly-N-acetyllactosamine). Interacts with SUSD2. Interacts with cargo receptor TMED10; the interaction mediates the translocation from the cytoplasm into the ERGIC (endoplasmic reticulum-Golgi intermediate compartment) and thereby secretion. Interacts with CD69.

The protein resides in the secreted. The protein localises to the extracellular space. It localises to the extracellular matrix. It is found in the cytoplasm. Lectin that binds beta-galactoside and a wide array of complex carbohydrates. Plays a role in regulating apoptosis, cell proliferation and cell differentiation. Inhibits CD45 protein phosphatase activity and therefore the dephosphorylation of Lyn kinase. Strong inducer of T-cell apoptosis. Plays a negative role in Th17 cell differentiation via activation of the receptor CD69. The chain is Galectin-1 (Lgals1) from Mus musculus (Mouse).